The following is a 492-amino-acid chain: Catalase isozyme 1 (492 aa).

Catalysis depends on residues histidine 65 and asparagine 138. A heme-binding site is contributed by tyrosine 348.

The protein belongs to the catalase family. In terms of assembly, homotetramer. The cofactor is heme.

The protein localises to the cytoplasm. The protein resides in the cytosol. It is found in the peroxisome matrix. The enzyme catalyses 2 H2O2 = O2 + 2 H2O. Its activity is regulated as follows. Inhibited by salicylic acid. In terms of biological role, catalyzes the degradation of hydrogen peroxide (H(2)O(2)) generated by peroxisomal oxidases to water and oxygen, thereby protecting cells from the toxic effects of hydrogen peroxide. The protein is Catalase isozyme 1 (CAT-1) of Nicotiana tabacum (Common tobacco).